Consider the following 89-residue polypeptide: Small ribosomal subunit protein uS15 (89 aa).

The protein belongs to the universal ribosomal protein uS15 family. As to quaternary structure, part of the 30S ribosomal subunit. Forms a bridge to the 50S subunit in the 70S ribosome, contacting the 23S rRNA.

One of the primary rRNA binding proteins, it binds directly to 16S rRNA where it helps nucleate assembly of the platform of the 30S subunit by binding and bridging several RNA helices of the 16S rRNA. In terms of biological role, forms an intersubunit bridge (bridge B4) with the 23S rRNA of the 50S subunit in the ribosome. The polypeptide is Small ribosomal subunit protein uS15 (Gluconacetobacter diazotrophicus (strain ATCC 49037 / DSM 5601 / CCUG 37298 / CIP 103539 / LMG 7603 / PAl5)).